Here is a 282-residue protein sequence, read N- to C-terminus: Bacterial lipoprotein FTN_1103 (282 aa).

The signal sequence occupies residues 1-28; sequence MKYGNLMMTKKKLLIGMVTISGIVILGS. Residue C29 is the site of N-palmitoyl cysteine attachment. Residue C29 is the site of S-diacylglycerol cysteine attachment.

The protein resides in the cell membrane. In terms of biological role, stimulates the host immune inflammatory signaling system allowing the host to combat the bacteria. Stimulates mouse interleukin-6 (Il6) production. The sequence is that of Bacterial lipoprotein FTN_1103 from Francisella tularensis subsp. novicida (strain U112).